The following is a 320-amino-acid chain: Cytochrome f (320 aa).

The N-terminal stretch at 1 to 35 is a signal peptide; it reads MQNRNTFSWVKEQMTRFISVSIMIYVITRTSISNA. The heme site is built by Y36, C56, C59, and H60. The helical transmembrane segment at 286 to 306 threads the bilayer; sequence VQGLLFFLASVILAQIFLVLK.

The protein belongs to the cytochrome f family. The 4 large subunits of the cytochrome b6-f complex are cytochrome b6, subunit IV (17 kDa polypeptide, petD), cytochrome f and the Rieske protein, while the 4 small subunits are PetG, PetL, PetM and PetN. The complex functions as a dimer. Requires heme as cofactor.

It is found in the plastid. The protein resides in the chloroplast thylakoid membrane. Functionally, component of the cytochrome b6-f complex, which mediates electron transfer between photosystem II (PSII) and photosystem I (PSI), cyclic electron flow around PSI, and state transitions. This chain is Cytochrome f, found in Drimys granadensis.